The chain runs to 453 residues: UDP-glycosyltransferase 74E1 (453 aa).

Residues serine 279, 332-334 (SPQ), 349-357 (HCGWNSTLE), and 371-374 (WADQ) contribute to the UDP-alpha-D-glucose site.

Belongs to the UDP-glycosyltransferase family.

The sequence is that of UDP-glycosyltransferase 74E1 (UGT74E1) from Arabidopsis thaliana (Mouse-ear cress).